The chain runs to 146 residues: Flavodoxin (146 aa).

The Flavodoxin-like domain maps to 4–143 (SLIVYGSTTG…EIVSWGSGIA (140 aa)).

This sequence belongs to the flavodoxin family. FMN serves as cofactor.

Its function is as follows. Low-potential electron donor to a number of redox enzymes. This chain is Flavodoxin, found in Maridesulfovibrio salexigens (strain ATCC 14822 / DSM 2638 / NCIMB 8403 / VKM B-1763) (Desulfovibrio salexigens).